The following is a 74-amino-acid chain: Cecropin-P4 (74 aa).

A signal peptide spans 1-13; it reads MFLMYLLVQTTES. Residues 45–74 constitute a propeptide, removed in mature form; that stretch reads HRRSVAHQEEASLHVKTDELPSPDTVREQL. The segment at 51-74 is disordered; that stretch reads HQEEASLHVKTDELPSPDTVREQL.

Belongs to the cecropin family. As to expression, expressed in the body wall, intestine, uterus and ovary.

The protein resides in the secreted. Its function is as follows. Has antibacterial activity against several Gram-positive and Gram-negative bacteria. Is weakly active against yeasts. Acts by a nonpore mechanism. The protein is Cecropin-P4 (ASCEC-4) of Ascaris suum (Pig roundworm).